The following is a 174-amino-acid chain: Tat proofreading chaperone TtrD (174 aa).

It belongs to the TorD/DmsD family. In terms of assembly, monomer.

It is found in the cytoplasm. Functionally, binds specifically to the Tat signal peptide of the TtrA subunit of the tetrathionate reductase. In Archaeoglobus fulgidus (strain ATCC 49558 / DSM 4304 / JCM 9628 / NBRC 100126 / VC-16), this protein is Tat proofreading chaperone TtrD (ttrD).